Reading from the N-terminus, the 318-residue chain is MLHHHCRRNPELQEELQIQAAVAAGDVHTVRKMLEQGYSPNGRDANGWTLLHFSAARGKERCVRVFLEHGADPTVKDLIGGFTALHYAAMHGRARIARLMLESEYRSDIINAKSNDGWTPLHVAAHYGRDSFVRLLLEFKAEVDPLSDKGTTPLQLAIIRERSSCVKILLDHNANIDIQNGFLLRYAVIKSNHSYCRMFLQRGADTNLGRLEDGQTPLHLSALRDDVLCARMLYNYGADTNTRNYEGQTPLAVSISISGSSRPCLDFLQEVTRQPRNLQDLCRIKIRQCIGLQNLKLLDELPIAKVMKDYLKHKFDDI.

ANK repeat units follow at residues 13–42, 46–75, 80–109, 116–145, 149–178, 180–208, and 213–242; these read QEEL…SPNG, NGWT…DPTV, GGFT…RSDI, DGWT…EVDP, KGTT…NIDI, NGFL…DTNL, and DGQT…DTNT. The region spanning 265-318 is the SOCS box domain; it reads LDFLQEVTRQPRNLQDLCRIKIRQCIGLQNLKLLDELPIAKVMKDYLKHKFDDI.

Belongs to the ankyrin SOCS box (ASB) family. Interacts with CUL5. Interacts with RNF7. Interacts with PSRC1.

It functions in the pathway protein modification; protein ubiquitination. Probable substrate-recognition component of a SCF-like ECS (Elongin-Cullin-SOCS-box protein) E3 ubiquitin-protein ligase complex which mediates the ubiquitination and subsequent proteasomal degradation of target proteins. Plays a role in spindle dynamics and genome integrity by targeting the mitotic progression protein PSRC1 for proteasomal degradation in a cell cycle-dependent manner. Also participates in meiosis by mediating the proper attachment between kinetochores and microtubules. This is Ankyrin repeat and SOCS box protein 7 (ASB7) from Homo sapiens (Human).